Consider the following 303-residue polypeptide: UDP-3-O-acyl-N-acetylglucosamine deacetylase (303 aa).

Residues histidine 78, histidine 237, and aspartate 241 each coordinate Zn(2+). The Proton donor role is filled by histidine 264.

The protein belongs to the LpxC family. Zn(2+) serves as cofactor.

The catalysed reaction is a UDP-3-O-[(3R)-3-hydroxyacyl]-N-acetyl-alpha-D-glucosamine + H2O = a UDP-3-O-[(3R)-3-hydroxyacyl]-alpha-D-glucosamine + acetate. It participates in glycolipid biosynthesis; lipid IV(A) biosynthesis; lipid IV(A) from (3R)-3-hydroxytetradecanoyl-[acyl-carrier-protein] and UDP-N-acetyl-alpha-D-glucosamine: step 2/6. Catalyzes the hydrolysis of UDP-3-O-myristoyl-N-acetylglucosamine to form UDP-3-O-myristoylglucosamine and acetate, the committed step in lipid A biosynthesis. The sequence is that of UDP-3-O-acyl-N-acetylglucosamine deacetylase from Xanthomonas euvesicatoria pv. vesicatoria (strain 85-10) (Xanthomonas campestris pv. vesicatoria).